Reading from the N-terminus, the 372-residue chain is C-X-C chemokine receptor type 5 (372 aa).

Over 1–55 (MNYPLTLEMDLENLEDLFWELDRLDNYNDTSLVENHLCPATEGPLMASFKAVFVP) the chain is Extracellular. N-linked (GlcNAc...) asparagine glycosylation occurs at Asn-28. A helical membrane pass occupies residues 56 to 76 (VAYSLIFLLGVIGNVLVLVIL). Topologically, residues 77–88 (ERHRQTRSSTET) are cytoplasmic. A helical membrane pass occupies residues 89–109 (FLFHLAVADLLLVFILPFAVA). At 110 to 124 (EGSVGWVLGTFLCKT) the chain is on the extracellular side. Residues Cys-122 and Cys-202 are joined by a disulfide bond. The chain crosses the membrane as a helical span at residues 125–145 (VIALHKVNFYCSSLLLACIAV). The Cytoplasmic portion of the chain corresponds to 146 to 167 (DRYLAIVHAVHAYRHRRLLSIH). A helical membrane pass occupies residues 168 to 188 (ITCGTIWLVGFLLALPEILFA). The Extracellular portion of the chain corresponds to 189 to 219 (KVSQGHHNNSLPRCTFSQENQAETHAWFTSR). Asn-196 is a glycosylation site (N-linked (GlcNAc...) asparagine). Residues 220-240 (FLYHVAGFLLPMLVMGWCYVG) form a helical membrane-spanning segment. At 241–259 (VVHRLRQAQRRPQRQKAVR) the chain is on the cytoplasmic side. Residues 260-280 (VAILVTSIFFLCWSPYHIVIF) traverse the membrane as a helical segment. Residues 281–304 (LDTLARLKAVDNTCKLNGSLPVAI) lie on the Extracellular side of the membrane. Residues 305 to 325 (TMCEFLGLAHCCLNPMLYTFA) form a helical membrane-spanning segment. Topologically, residues 326 to 372 (GVKFRSDLSRLLTKLGCTGPASLCQLFPSWRRSSLSESENATSLTTF) are cytoplasmic.

It belongs to the G-protein coupled receptor 1 family. Expression in mature B-cells and Burkitt lymphoma cells.

The protein resides in the cell membrane. Its function is as follows. Cytokine receptor that binds to B-lymphocyte chemoattractant (BLC). Involved in B-cell migration into B-cell follicles of spleen and Peyer patches but not into those of mesenteric or peripheral lymph nodes. May have a regulatory function in Burkitt lymphoma (BL) lymphomagenesis and/or B-cell differentiation. This is C-X-C chemokine receptor type 5 (CXCR5) from Homo sapiens (Human).